Reading from the N-terminus, the 999-residue chain is Helicase required for RNAi-mediated heterochromatin assembly 1 (999 aa).

The disordered stretch occupies residues 61-90 (EQIETSETSKTQDSEGNKVDKNLKENKSIR). The span at 70-88 (KTQDSEGNKVDKNLKENKS) shows a compositional bias: basic and acidic residues. Ser-94 is subject to Phosphoserine. Residues 106 to 124 (RNDITSGKNREFENEHHPA) show a composition bias toward basic and acidic residues. Positions 106–131 (RNDITSGKNREFENEHHPASDTSSWR) are disordered. 393 to 400 (GPPGTGKS) serves as a coordination point for ATP.

As to quaternary structure, cid12, hrr1 and rdp1 interact forming the RNA-directed RNA polymerase complex (RDRC). The RDRC complex interacts with the RITS complex via interaction between ago1 and hrr1. Clr4 has a role in mediating this interaction.

The protein resides in the cytoplasm. Its subcellular location is the nucleus. The catalysed reaction is ATP + H2O = ADP + phosphate + H(+). Functionally, has a role in the RNA interference (RNAi) pathway which is important for heterochromatin formation and accurate chromosome segregation. A member of the RNA-directed RNA polymerase complex (RDRC) which is involved in the generation of small interfering RNAs (siRNAs) and mediate their association with the RNA-induced transcriptional silencing (RITS) complex. RITS acts as a priming complex for dsRNA synthesis at the site of non-coding centromeric RNA. The sequence is that of Helicase required for RNAi-mediated heterochromatin assembly 1 (hrr1) from Schizosaccharomyces pombe (strain 972 / ATCC 24843) (Fission yeast).